A 189-amino-acid chain; its full sequence is High affinity copper uptake protein 1 (189 aa).

Over 1–67 (MDHSAHMGMS…AGLVINTAGE (67 aa)) the chain is Extracellular. Residues 13 to 18 (MGMSDM) carry the Methionine segments (Mets) motif motif. Positions 15–36 (MSDMNHSTTMPPSHHHPTSSGS) are disordered. Residues 20-36 (HSTTMPPSHHHPTSSGS) are compositionally biased toward low complexity. A helical membrane pass occupies residues 68–88 (MAGAFVAVFLLAMFYEGLKIA). The Cytoplasmic segment spans residues 89 to 131 (REGLLRKSQVSIRYNSMPVPGPNGTILMETHKTVGQQMLSFPH). The residue at position 113 (Thr113) is a Phosphothreonine. Residues 132 to 152 (LLQTVLHIIQVVISYFLMLIF) form a helical membrane-spanning segment. At 153–155 (MTY) the chain is on the extracellular side. A helical transmembrane segment spans residues 156-176 (NGYLCIAVAAGAGTGYFLFSW). Residues 177 to 189 (KKAVVVDITEHCH) are Cytoplasmic-facing. At Cys188 the chain carries Cysteine sulfenic acid (-SOH).

The protein belongs to the copper transporter (Ctr) (TC 1.A.56) family. SLC31A subfamily. As to quaternary structure, homotrimer; is stabilized by cisplatin via interactions between cisplatin and the methionine-rich clusters, and could be crucial for the copper(2+) reduction process and copper(1+) stabilization. Heterotrimer between SLC31A1, CCS and SOD1; this heterotrimer is copper(1+)-mediated and its maintenance is regulated through SOD1 activation. Interacts with KDR; this interaction is induced upon VEGFA stimulation leading to SLC31A1 and KDR subsequent co-internalization to early endosomes, thereby activating KDR downstream signaling in endothelial cells. Interacts (via C-terminal domain) with ATOX1 (via dimer form); this interaction improves ATOX1 stability and controls intracellular copper(1+) levels. Interacts with SLC31A2; this interaction stabilizes SLC31A2 and protects its from ubiquitination and degradation. Interacts (via C-terminal domain) with CCS; this interaction is copper(1+)-mediated. Proteolytic cleavage, leading to a truncated form, is facilitated by SLC31A2 and initiated preferentially by CTSL and to a minor extend by CTSB in endolysosomal compartments. A post-CTSL/cathepsin L processing occurs to yield to the fully truncated form. In terms of processing, sulfenylated at Cys-188 after stimulation with VEGFA, which induces SLC31A1-KDR disulfide bond formation and their co-internalization to early endosomes, driving to a sustained VEGFR2 signaling.

Its subcellular location is the cell membrane. The protein localises to the early endosome membrane. The protein resides in the recycling endosome membrane. It is found in the apical cell membrane. It localises to the late endosome membrane. Its subcellular location is the basolateral cell membrane. The catalysed reaction is Ag(+)(out) = Ag(+)(in). It catalyses the reaction Cu(+)(out) = Cu(+)(in). Uniporter that mediates the transport of copper(1+) from the extracellular space to the cytoplasm, across the plasma membrane and delivers directly copper(1+) to specific chaperone such as ATOX1, via a copper(1+)- mediated transient interaction between the C-terminal domain and a copper(1+) chaperone, thus controlling intracellular copper(1+) levels. May function in copper(1+) import from the apical membrane thus may drive intestinal copper absorption. The copper(1+) transport mechanism is sodium-independent, saturable and of high-affinity. Also mediates the uptake of silver(1+). May function in the influx of the platinum-containing chemotherapeutic agents. The platinum-containing chemotherapeutic agents uptake is saturable. In vitro, mediates the transport of cadmium(2+) into cells. Also participates in the first step of copper(2+) acquisition by cells through a direct transfer of copper(2+) from copper(2+) carriers in blood, such as ALB to the N-terminal domain of SLC31A1, leading to copper(2+) reduction and probably followed by copper(1+) stabilization. In addition, functions as a redox sensor to promote angiogenesis in endothelial cells, in a copper(1+) transport independent manner, by transmitting the VEGF-induced ROS signal through a sulfenylation at Cys-189 leadin g to a subsequent disulfide bond formation between SLC31A1 and KDR. The SLC31A1-KDR complex is then co-internalized to early endosomes, driving a sustained VEGFR2 signaling. Its function is as follows. Mobilizes copper(1+) out of the endosomal compartment, making copper(1+) available for export out of the cells. The chain is High affinity copper uptake protein 1 from Sus scrofa (Pig).